A 192-amino-acid chain; its full sequence is Probable nicotinate-nucleotide adenylyltransferase (192 aa).

It belongs to the NadD family.

It catalyses the reaction nicotinate beta-D-ribonucleotide + ATP + H(+) = deamido-NAD(+) + diphosphate. It functions in the pathway cofactor biosynthesis; NAD(+) biosynthesis; deamido-NAD(+) from nicotinate D-ribonucleotide: step 1/1. Catalyzes the reversible adenylation of nicotinate mononucleotide (NaMN) to nicotinic acid adenine dinucleotide (NaAD). The sequence is that of Probable nicotinate-nucleotide adenylyltransferase from Bradyrhizobium sp. (strain BTAi1 / ATCC BAA-1182).